Reading from the N-terminus, the 472-residue chain is Sad1-interacting factor 3 (472 aa).

2 disordered regions span residues Met-1 to Gly-47 and Ser-197 to Asp-223. Topologically, residues Met-1–Ser-443 are lumenal. Residues Asn-30 to His-40 are compositionally biased toward polar residues. The residue at position 42 (Ser-42) is a Phosphoserine. The helical transmembrane segment at Ile-444–Ile-464 threads the bilayer. At Leu-465–Arg-472 the chain is on the cytoplasmic side.

The protein belongs to the RMD1/sif2 family. As to quaternary structure, interacts with sad1.

It localises to the nucleus membrane. In Schizosaccharomyces pombe (strain 972 / ATCC 24843) (Fission yeast), this protein is Sad1-interacting factor 3 (sif3).